The primary structure comprises 109 residues: Spermidine export protein MdtI (109 aa).

Helical transmembrane passes span 6–26, 36–56, 64–84, and 88–108; these read WIHGAWLGLAIVLEIAANVLL, CYGILSLAAVLAAFSALSQAV, AYALWGGFGIAATLAAGWVLF, and LNPKGWVGVILLLAGMVMIKF.

Belongs to the drug/metabolite transporter (DMT) superfamily. Small multidrug resistance (SMR) (TC 2.A.7.1) family. MdtI subfamily. Forms a complex with MdtJ.

The protein localises to the cell inner membrane. Functionally, catalyzes the excretion of spermidine. The polypeptide is Spermidine export protein MdtI (Salmonella paratyphi A (strain ATCC 9150 / SARB42)).